The chain runs to 482 residues: MKFTLQSTAPQSAQHEYLLVLVTEQQLKNTADTYKINTLDTITHTSQFKSGFNEVLTLIGQAETCSYLNLVGLGDLKDLQPAKIAKLAQTIIKLVQTKFKQIHLDISALPIELHYLFALNLTQANYVFDEFKSKKSEAQLEQIHLITAQTGLTTQQLDLIQAIASGQDLARDLGNRPGNICFPEYLADQAKALAHEFPELLKVTILDEQQMADLGMNAFLAVSQGSDRPGRIITLEYNAQLEQAPVVLVGKGVTFDTGGISIKPAQGMDEMKFDMCGAASVLGTIRTLCEARLPIHVVGAVAAAENMPSGQATRPGDIVTTMSGQTVEILNTDAEGRLVLCDTLTYIKRFNPSLVIDIATLTGACVVALGKVVSGLFSPDDALAQELQQAGEQSFDRVWRLPVMDDYQELLDSPFADIANIGGPYGGAITAACFLQRFTRDYRWAHLDIAGTAWLSGTAKGATGRPVPLLVQFLANRVGTND.

Residues Lys-251 and Asp-256 each coordinate Mn(2+). Lys-263 is a catalytic residue. 3 residues coordinate Mn(2+): Asp-274, Asp-333, and Glu-335. Arg-337 is an active-site residue.

This sequence belongs to the peptidase M17 family. Mn(2+) is required as a cofactor.

The protein localises to the cytoplasm. It carries out the reaction Release of an N-terminal amino acid, Xaa-|-Yaa-, in which Xaa is preferably Leu, but may be other amino acids including Pro although not Arg or Lys, and Yaa may be Pro. Amino acid amides and methyl esters are also readily hydrolyzed, but rates on arylamides are exceedingly low.. It catalyses the reaction Release of an N-terminal amino acid, preferentially leucine, but not glutamic or aspartic acids.. Its function is as follows. Presumably involved in the processing and regular turnover of intracellular proteins. Catalyzes the removal of unsubstituted N-terminal amino acids from various peptides. In Acinetobacter baylyi (strain ATCC 33305 / BD413 / ADP1), this protein is Probable cytosol aminopeptidase.